We begin with the raw amino-acid sequence, 333 residues long: D-alanine--D-alanine ligase (333 aa).

The ATP-grasp domain occupies 124–329 (KMWFSALGIP…FTEYLYSNIK (206 aa)). Residue 154 to 209 (ALETWGSVFIKAASQGSSVGCYRVDSIDELASSLKEAFSYSPYVVVEKTIHARELE) coordinates ATP. Positions 283, 296, and 298 each coordinate Mg(2+).

Belongs to the D-alanine--D-alanine ligase family. The cofactor is Mg(2+). It depends on Mn(2+) as a cofactor.

It is found in the cytoplasm. The catalysed reaction is 2 D-alanine + ATP = D-alanyl-D-alanine + ADP + phosphate + H(+). The protein operates within cell wall biogenesis; peptidoglycan biosynthesis. Functionally, cell wall formation. This is D-alanine--D-alanine ligase from Shewanella sediminis (strain HAW-EB3).